We begin with the raw amino-acid sequence, 335 residues long: MEVINSNQIGVSFKGSGSYVPHQILTNHEISKKVDTSDEWIKSRTGISQRRISGLSENVSEMGYKAGLAAIEMAKWDIETIDLIILATSTPHDLFGSAPEIQSKLGANNAVAFDLTAACSGFLFAVITATQFLKAGSYRRAIVIGSDQLSSYVDWNDRRSCILFGDGAGALAIEATNEFDNLIGFSMRTDGQRGSFLNLPSQKNNDQIIDNINFSSGGFSTIAMNGQEVYKFAVREVPLIIDNLFKKTNFNSEKINWLLLHQANQRILDSVGDRLNISSEKILSNLSNYGNTSAATIPLMLDEAIRNKKIKENDIIATSGFGAGLSWGAALIRWG.

Residues C119 and H261 contribute to the active site. The ACP-binding stretch occupies residues 262-266; the sequence is QANQR. N291 is a catalytic residue.

It belongs to the thiolase-like superfamily. FabH family. In terms of assembly, homodimer.

It localises to the cytoplasm. It catalyses the reaction malonyl-[ACP] + acetyl-CoA + H(+) = 3-oxobutanoyl-[ACP] + CO2 + CoA. Its pathway is lipid metabolism; fatty acid biosynthesis. Catalyzes the condensation reaction of fatty acid synthesis by the addition to an acyl acceptor of two carbons from malonyl-ACP. Catalyzes the first condensation reaction which initiates fatty acid synthesis and may therefore play a role in governing the total rate of fatty acid production. Possesses both acetoacetyl-ACP synthase and acetyl transacylase activities. Its substrate specificity determines the biosynthesis of branched-chain and/or straight-chain of fatty acids. This chain is Beta-ketoacyl-[acyl-carrier-protein] synthase III, found in Prochlorococcus marinus (strain MIT 9515).